We begin with the raw amino-acid sequence, 313 residues long: Glyoxylate/hydroxypyruvate reductase A (313 aa).

Residue Arg228 is part of the active site. The active-site Proton donor is the His276.

The protein belongs to the D-isomer specific 2-hydroxyacid dehydrogenase family. GhrA subfamily.

The protein resides in the cytoplasm. The enzyme catalyses glycolate + NADP(+) = glyoxylate + NADPH + H(+). The catalysed reaction is (R)-glycerate + NAD(+) = 3-hydroxypyruvate + NADH + H(+). It catalyses the reaction (R)-glycerate + NADP(+) = 3-hydroxypyruvate + NADPH + H(+). Its function is as follows. Catalyzes the NADPH-dependent reduction of glyoxylate and hydroxypyruvate into glycolate and glycerate, respectively. This is Glyoxylate/hydroxypyruvate reductase A from Serratia proteamaculans (strain 568).